A 389-amino-acid chain; its full sequence is Chalcone synthase (389 aa).

Active-site residues include Cys-164, His-303, and Asn-336.

The protein belongs to the thiolase-like superfamily. Chalcone/stilbene synthases family. As to quaternary structure, homodimer. As to expression, mainly expressed in flowers, to a lower extent in young leaves, and barely in mature leaves and twigs.

The catalysed reaction is (E)-4-coumaroyl-CoA + 3 malonyl-CoA + 3 H(+) = 2',4,4',6'-tetrahydroxychalcone + 3 CO2 + 4 CoA. It participates in secondary metabolite biosynthesis; flavonoid biosynthesis. Functionally, the primary product of this enzyme is 4,2',4',6'-tetrahydroxychalcone (also termed naringenin-chalcone or chalcone) which can under specific conditions spontaneously isomerize into naringenin. In Rhododendron dauricum (Azalea daurica), this protein is Chalcone synthase.